The following is a 455-amino-acid chain: Probable ATP-dependent RNA helicase DDX47 (455 aa).

The segment covering 1–10 (MAAPEEHDSP) has biased composition (basic and acidic residues). Residues 1-20 (MAAPEEHDSPTEASQPIVEE) are disordered. A2 carries the N-acetylalanine modification. S9 carries the post-translational modification Phosphoserine. The short motif at 24–52 (KTFKDLGVTDVLCEACDQLGWTKPTKIQI) is the Q motif element. Residues 55–226 (IPLALQGRDI…RAALKNPVKC (172 aa)) enclose the Helicase ATP-binding domain. 68–75 (AETGSGKT) serves as a coordination point for ATP. T149 is modified (phosphothreonine). A DEAD box motif is present at residues 174–177 (DEAD). Residues 237–397 (KLQQYYIFIP…GFPTQDDEVM (161 aa)) form the Helicase C-terminal domain. Positions 413–428 (ELREHGEKKKRSREDA) are enriched in basic and acidic residues. Residues 413–455 (ELREHGEKKKRSREDAGDNDDTEGAIGVRNKVAGGKMKKRKGR) are disordered. A Phosphoserine modification is found at S424.

It belongs to the DEAD box helicase family. DDX47/RRP3 subfamily. As to quaternary structure, interacts with AGO1 and AGO2. Interacts with GABARAP. Interacts with NOL8; the interaction is RNA-dependent. As to expression, expressed in skin, lung and breast. Also expressed in the brain.

The protein resides in the nucleus. It is found in the nucleolus. It carries out the reaction ATP + H2O = ADP + phosphate + H(+). Required for efficient ribosome biogenesis. May have a role in mRNA splicing. Involved in apoptosis. The sequence is that of Probable ATP-dependent RNA helicase DDX47 (DDX47) from Homo sapiens (Human).